The chain runs to 557 residues: MSNPRHNEREVRSPRGDELNAKSWLTEAPLRMLMNNLDPDVAERPHELVVYGGIGRAARTWDDFDRIVATLKTLNDDETLLVQSGKPVGVFRTHKDAPRVLIANSNLVPHWANWDHFNELDKKDLAMYGQMTAGSWIYIGAQGIVQGTYETFVEAGRQHYGGNLKGRWILTGGLGGMGGAQPLAAVMAGACCLAVECDETRADFRLRTRYVDEKTHSLDEALAKIDAWTKAGEAKSIALIGNAAEIFPELVKRGVKPDIVTDQTSAHDPVHGYLPLGWTVAEWRAKQENDPKAVEKAARASMKVQVQAMLDFWNAGIPTVDYGNNIRQMALEEGLENAFAFPGFVPAYIRPLFCRGIGPFRWAALSGDPEDIAKTDAKVKELLPDNKHLHNWLDMAKERIAFQGLPARICWVGLGDRHRLGLAFNEMVRNGELKAPIVIGRDHLDSGSVASPNRETEAMKDGSDAVSDWPLLNALLNTASGATWVSLHHGGGVGMGFSQHAGMVICCDGTEDADRRLERVLWNDPATGVMRHADAGYDIALDWARKQGLRLPAILGN.

The disordered stretch occupies residues 1 to 20; sequence MSNPRHNEREVRSPRGDELN. NAD(+) contacts are provided by residues 52–53, Q130, 176–178, E196, R201, 242–243, 263–267, 273–274, and Y322; these read GG, GMG, NA, QTSAH, and YL. Residue C410 is part of the active site. G492 is a binding site for NAD(+).

This sequence belongs to the urocanase family. Requires NAD(+) as cofactor.

The protein localises to the cytoplasm. It carries out the reaction 4-imidazolone-5-propanoate = trans-urocanate + H2O. Its pathway is amino-acid degradation; L-histidine degradation into L-glutamate; N-formimidoyl-L-glutamate from L-histidine: step 2/3. In terms of biological role, catalyzes the conversion of urocanate to 4-imidazolone-5-propionate. The polypeptide is Urocanate hydratase (Brucella suis (strain ATCC 23445 / NCTC 10510)).